The following is a 311-amino-acid chain: Manganese-dependent inorganic pyrophosphatase (311 aa).

Positions 10, 14, 16, 75, 97, and 149 each coordinate Mn(2+).

This sequence belongs to the PPase class C family. Homodimer. The cofactor is Mn(2+).

The enzyme catalyses diphosphate + H2O = 2 phosphate + H(+). The chain is Manganese-dependent inorganic pyrophosphatase (ppaC) from Methanothrix thermoacetophila (strain DSM 6194 / JCM 14653 / NBRC 101360 / PT) (Methanosaeta thermophila).